The following is a 257-amino-acid chain: Deoxyribose-phosphate aldolase (257 aa).

Catalysis depends on Asp102, which acts as the Proton donor/acceptor. Lys166 acts as the Schiff-base intermediate with acetaldehyde in catalysis. Catalysis depends on Lys198, which acts as the Proton donor/acceptor.

The protein belongs to the DeoC/FbaB aldolase family. DeoC type 2 subfamily.

It is found in the cytoplasm. The enzyme catalyses 2-deoxy-D-ribose 5-phosphate = D-glyceraldehyde 3-phosphate + acetaldehyde. It participates in carbohydrate degradation; 2-deoxy-D-ribose 1-phosphate degradation; D-glyceraldehyde 3-phosphate and acetaldehyde from 2-deoxy-alpha-D-ribose 1-phosphate: step 2/2. Catalyzes a reversible aldol reaction between acetaldehyde and D-glyceraldehyde 3-phosphate to generate 2-deoxy-D-ribose 5-phosphate. The polypeptide is Deoxyribose-phosphate aldolase (Shewanella halifaxensis (strain HAW-EB4)).